The sequence spans 391 residues: MDVRESISLQNQVSMNLAKHVITTVSQNSNVIFSPASINVVLSIIAAGSAGATKDQILSFLKFSSTDQLNSFSSEIVSAVLADGSANGGPKLSVANGAWIDKSLSFKPSFKQLLEDSYKAASNQADFQSKAVEVIAEVNSWAEKETNGLITEVLPEGSADSMTKLIFANALYFKGTWNEKFDESLTQEGEFHLLDGNKVTAPFMTSKKKQYVSAYDGFKVLGLPYLQGQDKRQFSMYFYLPDANNGLSDLLDKIVSTPGFLDNHIPRRQVKVREFKIPKFKFSFGFDASNVLKGLGLTSPFSGEEGLTEMVESPEMGKNLCVSNIFHKACIEVNEEGTEAAAASAGVIKLRGLLMEEDEIDFVADHPFLLVVTENITGVVLFIGQVVDPLH.

Positions 337-361 are RCL; the sequence is GTEAAAASAGVIKLRGLLMEEDEID. Asn375 carries N-linked (GlcNAc...) asparagine glycosylation.

The protein belongs to the serpin family. As to quaternary structure, interacts with RD21A. As to expression, expressed in root tips. Expressed in siliques (at protein level).

Its subcellular location is the secreted. The protein resides in the extracellular space. It is found in the apoplast. It localises to the cytoplasm. Functionally, inhibits metacaspase-9 (MC9) cysteine protease. Functions through cleavage of its reactive center loop and covalent binding to MC9. Involved in the control of elicitor-stimulated programmed cell death (PCD). During infection by the necrotrophic fungal pathogen Botrytis cinerea, functions to protect cells by limiting the PCD-promoting protease RD21A activity that is released from the ER body or vacuole to the cytoplasm. Involved in the control of water stress-induced cell death by limiting the pro-death protease RD21A activity that is released from the vacuole to the cytoplasm. This is Serpin-ZX from Arabidopsis thaliana (Mouse-ear cress).